Reading from the N-terminus, the 118-residue chain is Large ribosomal subunit protein bL19 (118 aa).

The protein belongs to the bacterial ribosomal protein bL19 family.

Functionally, this protein is located at the 30S-50S ribosomal subunit interface and may play a role in the structure and function of the aminoacyl-tRNA binding site. The sequence is that of Large ribosomal subunit protein bL19 from Campylobacter jejuni subsp. doylei (strain ATCC BAA-1458 / RM4099 / 269.97).